The sequence spans 438 residues: Enolase (438 aa).

Positions 159 and 168 each coordinate substrate. The active-site Proton donor is the E211. Mg(2+)-binding residues include D246, E297, and D322. 2 residues coordinate substrate: E297 and D322. The active-site Proton acceptor is the K347. Residues 374-377 (SHRS) and K398 contribute to the substrate site.

The protein belongs to the enolase family. In terms of assembly, homodimer. The cofactor is Mg(2+).

Its subcellular location is the cytoplasm. It carries out the reaction (2R)-2-phosphoglycerate = phosphoenolpyruvate + H2O. It functions in the pathway carbohydrate degradation; glycolysis; pyruvate from D-glyceraldehyde 3-phosphate: step 4/5. This Penicillium citrinum protein is Enolase (enoA).